Consider the following 495-residue polypeptide: 4-aminobutyrate aminotransferase (495 aa).

160 to 161 (GS) contacts pyridoxal 5'-phosphate. Arg216 contributes to the substrate binding site. At Lys350 the chain carries N6-(pyridoxal phosphate)lysine. Residue Thr374 coordinates pyridoxal 5'-phosphate.

Belongs to the class-III pyridoxal-phosphate-dependent aminotransferase family. In terms of assembly, homodimer. Requires pyridoxal 5'-phosphate as cofactor.

The catalysed reaction is 4-aminobutanoate + 2-oxoglutarate = succinate semialdehyde + L-glutamate. The chain is 4-aminobutyrate aminotransferase (gabT) from Dictyostelium discoideum (Social amoeba).